A 147-amino-acid chain; its full sequence is 3-dehydroquinate dehydratase (147 aa).

Tyr23 acts as the Proton acceptor in catalysis. Residues Asn75, His81, and Asp88 each coordinate substrate. Catalysis depends on His101, which acts as the Proton donor. Residues 102-103 and Arg112 contribute to the substrate site; that span reads LS.

This sequence belongs to the type-II 3-dehydroquinase family. As to quaternary structure, homododecamer.

It carries out the reaction 3-dehydroquinate = 3-dehydroshikimate + H2O. It participates in metabolic intermediate biosynthesis; chorismate biosynthesis; chorismate from D-erythrose 4-phosphate and phosphoenolpyruvate: step 3/7. In terms of biological role, catalyzes a trans-dehydration via an enolate intermediate. This is 3-dehydroquinate dehydratase from Nitrosococcus oceani (strain ATCC 19707 / BCRC 17464 / JCM 30415 / NCIMB 11848 / C-107).